Here is a 37-residue protein sequence, read N- to C-terminus: Esculentin-2JDa (37 aa).

Cysteines 31 and 37 form a disulfide.

As to expression, expressed by the skin glands.

The protein localises to the secreted. In terms of biological role, has antibacterial activity against E.coli and S.aureus strains. This is Esculentin-2JDa from Odorrana jingdongensis (Jingdong frog).